A 413-amino-acid chain; its full sequence is Ureide permease 5 (413 aa).

The Extracellular portion of the chain corresponds to 1–18 (MMIAQELGIYVVESKGGA). Residues 19–39 (ILCLLLSLLCLGTWPALMALL) form a helical membrane-spanning segment. The Cytoplasmic segment spans residues 40–50 (ERRGRLPQHTY). A helical membrane pass occupies residues 51-71 (LDYSITNFLAAIFIAFVFGGI). The Extracellular segment spans residues 72 to 91 (GESTHEAPSFITQLTQIQDN). Residues 92-112 (WPSVLFAMAGGVGLSIGNLAT) form a helical membrane-spanning segment. At 113 to 115 (QYS) the chain is on the cytoplasmic side. The chain crosses the membrane as a helical span at residues 116–136 (LAFVGLSVTEVTAASITVVVG). The Extracellular portion of the chain corresponds to 137–149 (TTVNYFLDNGLNR). A helical membrane pass occupies residues 150 to 170 (ADILFSGVGCFMVAVCLGSAV). The Cytoplasmic portion of the chain corresponds to 171–240 (HSSNSADIKA…RAIKVLGKSM (70 aa)). Residue 232–239 (AIKVLGKS) participates in ATP binding. A helical membrane pass occupies residues 241–261 (VVGLGITFFAGLSFSLFSPLF). The Extracellular segment spans residues 262-278 (NLATNDQWHTLKQGVPK). The chain crosses the membrane as a helical span at residues 279–299 (LIVYTAFFYFSLSCFVIAVAL). Residues 300 to 326 (NISFLYKPVLDSPRSSFREYLSDWNGR) lie on the Cytoplasmic side of the membrane. The helical transmembrane segment at 327–347 (GWALAAGLLCGFGNGLQFMGG) threads the bilayer. Residues 348–352 (QAAGY) are Extracellular-facing. The helical transmembrane segment at 353–373 (AASDAVQALPLVSTFWGIYLF) threads the bilayer. Residues 374–384 (GEYRRSSTRTY) lie on the Cytoplasmic side of the membrane. Residues 385–405 (ALLVGMLVMFTVAVGLLMASA) form a helical membrane-spanning segment. The Extracellular portion of the chain corresponds to 406–413 (GERETRFT).

It belongs to the plant ureide permease (TC 2.A.7.19) family. In terms of tissue distribution, expressed in lateral roots, rosette leaves, stems, stipules, flower stigma, pedicels and the connective tissue between pollen sacks.

It is found in the membrane. Its function is as follows. Proton-coupled transporter that transports a wide spectrum of oxo derivatives of heterocyclic nitrogen compounds, including allantoin, uric acid and xanthine, but not adenine. Mediates transport of uracil and 5-fluorouracil (a toxic uracil analog). Proton-coupled transporter that transports a wide spectrum of oxo derivatives of heterocyclic nitrogen compounds, including allantoin, xanthine and uracil. This Arabidopsis thaliana (Mouse-ear cress) protein is Ureide permease 5.